Here is a 354-residue protein sequence, read N- to C-terminus: 4-hydroxy-2-oxovalerate aldolase 5 (354 aa).

The 253-residue stretch at 11-263 (VTVHDMCLRD…ETGCDLFKLM (253 aa)) folds into the Pyruvate carboxyltransferase domain. Position 19 to 20 (19 to 20 (RD)) interacts with substrate. Asp20 contributes to the Mn(2+) binding site. Catalysis depends on His23, which acts as the Proton acceptor. The substrate site is built by Ser173 and His202. Mn(2+) contacts are provided by His202 and His204. Substrate is bound at residue Tyr293.

It belongs to the 4-hydroxy-2-oxovalerate aldolase family.

It carries out the reaction (S)-4-hydroxy-2-oxopentanoate = acetaldehyde + pyruvate. The protein is 4-hydroxy-2-oxovalerate aldolase 5 of Dechloromonas aromatica (strain RCB).